A 358-amino-acid polypeptide reads, in one-letter code: Transcription factor bHLH67 (358 aa).

Residues 125 to 176 (NMTLPSSTSSPLSAHSRRKRKINHLLPQEMTREKRKRRKTKPSKNNEEIENQ) form a disordered region. A compositionally biased stretch (low complexity) spans 127-137 (TLPSSTSSPLS). Over residues 157 to 166 (EKRKRRKTKP) the composition is skewed to basic residues. Residues 175–226 (NQRINHIAVERNRRRQMNEHINSLRALLPPSYIQRGDQASIVGGAINYVKVL) enclose the bHLH domain.

In terms of assembly, homodimer. In terms of tissue distribution, expressed constitutively in roots, leaves, stems, and flowers.

The protein localises to the nucleus. This Arabidopsis thaliana (Mouse-ear cress) protein is Transcription factor bHLH67 (BHLH67).